A 265-amino-acid polypeptide reads, in one-letter code: Probable esterase tazC (265 aa).

Catalysis depends on charge relay system residues serine 119, aspartate 209, and histidine 236.

This sequence belongs to the LovG family.

The protein operates within secondary metabolite biosynthesis. Its function is as follows. Probable esterase; part of the gene cluster that mediates the biosynthesis of azaterrilone A and other azaphilones, a class of fungal metabolites characterized by a highly oxygenated pyrano-quinone bicyclic core and exhibiting a broad range of bioactivities. The first step of the pathway begins with the non-reducing polyketide synthase tazA that assembles one acetyl-CoA starter unit, five malonyl-CoA units, and catalyzes a series of Claisen condensations, methylation, PT-mediated cyclization, and finally releases the first hexaketide precursor through the R-domain. The tazA product then undergoes reduction on its terminal ketone and the following pyran-ring formation by yet undetermined enzyme(s). Dehydration and enoyl reduction, possibly involving the trans-enoyl reductase tazE leads to the next intermediate. TazD is predicted as an acetyltransferase and might catalyze the acetylation steps leading to the synthesis of azaterrilone A. Azaterrilone A is not the final product of the taz pathway and both the highly reducing polyketide synthase tazB and the dual enzyme tazHJ catalyze late steps of the pathway, leading to the production of the 2 final stereoisomers that contain additional polyketide modification whose structures have still to be determined. The chain is Probable esterase tazC from Aspergillus terreus (strain NIH 2624 / FGSC A1156).